The sequence spans 542 residues: Phosphoenolpyruvate carboxykinase (ATP) (542 aa).

Residues Arg67, Tyr208, and Lys214 each coordinate substrate. ATP is bound by residues Lys214, His233, and 249-257; that span reads GLSGTGKTT. Lys214 and His233 together coordinate Mn(2+). Asp270 serves as a coordination point for Mn(2+). ATP-binding positions include Glu298, Arg334, 450–451, and Thr456; that span reads RI. Arg334 is a substrate binding site.

The protein belongs to the phosphoenolpyruvate carboxykinase (ATP) family. In terms of assembly, monomer. Mn(2+) is required as a cofactor.

The protein localises to the cytoplasm. The enzyme catalyses oxaloacetate + ATP = phosphoenolpyruvate + ADP + CO2. It functions in the pathway carbohydrate biosynthesis; gluconeogenesis. Involved in the gluconeogenesis. Catalyzes the conversion of oxaloacetate (OAA) to phosphoenolpyruvate (PEP) through direct phosphoryl transfer between the nucleoside triphosphate and OAA. This is Phosphoenolpyruvate carboxykinase (ATP) from Vibrio cholerae serotype O1 (strain ATCC 39541 / Classical Ogawa 395 / O395).